Reading from the N-terminus, the 671-residue chain is UvrABC system protein C (671 aa).

Residues 16–95 enclose the GIY-YIG domain; that stretch reads TTPGVYRFRD…IKEFKPRFNV (80 aa). Residues 207–242 enclose the UVR domain; it reads KRFISRLEKDMAAAVAELDYERAAGLRDDIIALRKV.

This sequence belongs to the UvrC family. In terms of assembly, interacts with UvrB in an incision complex.

The protein resides in the cytoplasm. Its function is as follows. The UvrABC repair system catalyzes the recognition and processing of DNA lesions. UvrC both incises the 5' and 3' sides of the lesion. The N-terminal half is responsible for the 3' incision and the C-terminal half is responsible for the 5' incision. In Paenarthrobacter aurescens (strain TC1), this protein is UvrABC system protein C.